Reading from the N-terminus, the 423-residue chain is Probable multifunctional protein ADE2 (423 aa).

The segment at 1-263 (MSSLAEIASR…KVMDITATFS (263 aa)) is SAICAR synthetase. Positions 264 to 423 (KHQQKCHVLV…NIYNANRKLE (160 aa)) are AIR carboxylase.

This sequence in the N-terminal section; belongs to the SAICAR synthetase family. The protein in the C-terminal section; belongs to the AIR carboxylase family. Class II subfamily.

It catalyses the reaction 5-amino-1-(5-phospho-D-ribosyl)imidazole-4-carboxylate + L-aspartate + ATP = (2S)-2-[5-amino-1-(5-phospho-beta-D-ribosyl)imidazole-4-carboxamido]succinate + ADP + phosphate + 2 H(+). The enzyme catalyses 5-amino-1-(5-phospho-D-ribosyl)imidazole-4-carboxylate + H(+) = 5-amino-1-(5-phospho-beta-D-ribosyl)imidazole + CO2. Its pathway is purine metabolism; IMP biosynthesis via de novo pathway; 5-amino-1-(5-phospho-D-ribosyl)imidazole-4-carboxamide from 5-amino-1-(5-phospho-D-ribosyl)imidazole-4-carboxylate: step 1/2. It participates in purine metabolism; IMP biosynthesis via de novo pathway; 5-amino-1-(5-phospho-D-ribosyl)imidazole-4-carboxylate from 5-amino-1-(5-phospho-D-ribosyl)imidazole (carboxylase route): step 1/1. In Caenorhabditis elegans, this protein is Probable multifunctional protein ADE2.